A 119-amino-acid polypeptide reads, in one-letter code: Large ribosomal subunit protein bL20 (119 aa).

It belongs to the bacterial ribosomal protein bL20 family.

Functionally, binds directly to 23S ribosomal RNA and is necessary for the in vitro assembly process of the 50S ribosomal subunit. It is not involved in the protein synthesizing functions of that subunit. This Clostridium botulinum (strain Alaska E43 / Type E3) protein is Large ribosomal subunit protein bL20.